Reading from the N-terminus, the 183-residue chain is Crossover junction endodeoxyribonuclease RuvC (183 aa).

Residues aspartate 7, glutamate 66, and aspartate 138 contribute to the active site. Aspartate 7, glutamate 66, and aspartate 138 together coordinate Mg(2+).

The protein belongs to the RuvC family. Homodimer which binds Holliday junction (HJ) DNA. The HJ becomes 2-fold symmetrical on binding to RuvC with unstacked arms; it has a different conformation from HJ DNA in complex with RuvA. In the full resolvosome a probable DNA-RuvA(4)-RuvB(12)-RuvC(2) complex forms which resolves the HJ. Mg(2+) is required as a cofactor.

The protein localises to the cytoplasm. The enzyme catalyses Endonucleolytic cleavage at a junction such as a reciprocal single-stranded crossover between two homologous DNA duplexes (Holliday junction).. The RuvA-RuvB-RuvC complex processes Holliday junction (HJ) DNA during genetic recombination and DNA repair. Endonuclease that resolves HJ intermediates. Cleaves cruciform DNA by making single-stranded nicks across the HJ at symmetrical positions within the homologous arms, yielding a 5'-phosphate and a 3'-hydroxyl group; requires a central core of homology in the junction. The consensus cleavage sequence is 5'-(A/T)TT(C/G)-3'. Cleavage occurs on the 3'-side of the TT dinucleotide at the point of strand exchange. HJ branch migration catalyzed by RuvA-RuvB allows RuvC to scan DNA until it finds its consensus sequence, where it cleaves and resolves the cruciform DNA. The sequence is that of Crossover junction endodeoxyribonuclease RuvC from Burkholderia ambifaria (strain MC40-6).